The primary structure comprises 1413 residues: Alpha-latrocrustotoxin-Lt1a (1413 aa).

A propeptide spanning residues 1–28 (VSIFIFHFSANILVRNSEMKGKRVISKR) is cleaved from the precursor. Residues 238-257 (ALFALFYGTQTFISIMFYLV) form a helix H8 is the probable transmembrane region of the tetrameric pore inserted in the target cell membrane region. ANK repeat units lie at residues 457–490 (DIHR…QVGA), 494–524 (MGRK…LLNV), 528–557 (NGYT…DVNV), 562–592 (NELT…DVNA), 596–625 (AGFT…GINI), 629–658 (SGLT…KVKL), 664–694 (NGMT…DVNA), 699–729 (KNWT…DIST), 733–762 (QAIT…VVDQ), 766–795 (NGFT…NINA), 799–828 (DGST…NIKA), 832–861 (INQM…SLMN), 866–895 (RDEY…DVNE), 899–928 (DGNT…DFRL), 965–995 (RGKT…TLNE), 996–1026 (DQCS…NPTA), 1031–1072 (NQVS…DINK), 1077–1106 (QQST…DPNK), 1109–1139 (RGDP…DVNT), and 1143–1172 (EQFT…DVNA). The propeptide occupies 1193-1413 (RSLGRRFFRN…NRPTNVLQIK (221 aa)).

Belongs to the cationic peptide 01 (latrotoxin) family. 01 (alpha-latrocrustotoxin) subfamily. Homotetramer in membranes. As to expression, expressed by the venom gland.

It localises to the secreted. It is found in the target cell membrane. Crustacean-selective presynaptic neurotoxin that induces neurotransmitter exocytosis. May bind to crustacean neurexin-1 homolog, adhesion G protein-coupled receptor L1 homolog, and receptor-type tyrosine-protein phosphatase S homolog, and induces neurotransmitter exocytosis both by forming tetrameric pores in membranes and signaling via G protein-coupled receptor. This recombinant protein form channels in artificial membrane bilayers, that are stabilized by calcium ions and allow calcium flux at negative membrane potentials. This is Alpha-latrocrustotoxin-Lt1a from Latrodectus tredecimguttatus (Mediterranean black widow spider).